The primary structure comprises 385 residues: GDSL esterase/lipase 5 (385 aa).

An N-terminal signal peptide occupies residues 1–35 (MRESTLMEKVTRRTISSFIFFIVSSTILFLAGKSS). N-linked (GlcNAc...) asparagine glycosylation is present at asparagine 45. Catalysis depends on serine 55, which acts as the Nucleophile. Residues asparagine 66, asparagine 194, asparagine 211, and asparagine 289 are each glycosylated (N-linked (GlcNAc...) asparagine). Active-site residues include aspartate 345 and histidine 348.

Belongs to the 'GDSL' lipolytic enzyme family.

It localises to the secreted. The polypeptide is GDSL esterase/lipase 5 (GLIP5) (Arabidopsis thaliana (Mouse-ear cress)).